The chain runs to 261 residues: Histone H1-I (261 aa).

Positions 1–22 (MSETEAAPVVAPAAEAAPAAEA) are enriched in low complexity. Disordered regions lie at residues 1–63 (MSET…PPYI) and 125–261 (FKLS…KGKK). Residues 41–50 (APKEPKAPKE) show a composition bias toward basic and acidic residues. Residues 58–129 (THPPYIEMVK…KVKGSFKLSE (72 aa)) enclose the H15 domain. The span at 133-142 (AKAKKSTPKK) shows a compositional bias: basic residues. A run of 2 repeats spans residues 136–140 (KKSTP) and 188–192 (KKATP). Positions 136-250 (KKSTPKKAKA…KKAPAKKSTP (115 aa)) are 7 X 5 AA repeats of K-K-[AS]-T-P. A DNA-binding region spans residues 139-142 (TPKK). A compositionally biased stretch (basic and acidic residues) spans 143-198 (AKADGEAKPKKSEAKPKKAEAVKKTKAPKEKVERPKKEKKEKVEKKKATPKAEKPK). The 3; approximate repeat unit spans residues 199–203 (KAATP). 4 consecutive repeat copies span residues 209–213 (KKATP), 230–234 (KKATP), 236–240 (KKAAP), and 246–250 (KKSTP). The span at 227-250 (AKPKKATPSKKAAPKKAPAKKSTP) shows a compositional bias: basic residues. Residues 251-261 (KAKEAKSKGKK) are compositionally biased toward basic and acidic residues.

This sequence belongs to the histone H1/H5 family.

It is found in the nucleus. It localises to the chromosome. Functionally, histones H1 are necessary for the condensation of nucleosome chains into higher-order structures. The polypeptide is Histone H1-I (H1-I) (Volvox carteri (Green alga)).